Here is a 336-residue protein sequence, read N- to C-terminus: O-methyltransferase 2 (336 aa).

S-adenosyl-L-methionine contacts are provided by Gly-170, Asp-198, Asn-221, Phe-222, and Lys-237. The Proton acceptor role is filled by His-241.

The protein belongs to the class I-like SAM-binding methyltransferase superfamily. Cation-independent O-methyltransferase family. COMT subfamily.

It carries out the reaction (3,5-dichloro-2,4,6-trihydroxyphenyl)hexan-1-one + S-adenosyl-L-methionine = 1-(3,5-dichloro-2,6-dihydroxy-4-methoxyphenyl)hexan-1-one + S-adenosyl-L-homocysteine + H(+). The sequence is that of O-methyltransferase 2 (omt2) from Dictyostelium discoideum (Social amoeba).